The following is a 488-amino-acid chain: GTPase Der (488 aa).

2 EngA-type G domains span residues 3–166 (PVVA…AEAM) and 199–372 (IKLA…DSAT). GTP-binding positions include 9-16 (GRPNVGKS), 56-60 (DTGGI), 118-121 (NKVD), 205-212 (GKPNVGKS), 252-256 (DTAGV), and 317-320 (NKWD). A KH-like domain is found at 373 to 457 (RRVSTSMLTR…PIQLRFQEGD (85 aa)). The segment at 469–488 (MSQERRRKRALSHIKDRKTK) is disordered. The span at 473–488 (RRRKRALSHIKDRKTK) shows a compositional bias: basic residues.

It belongs to the TRAFAC class TrmE-Era-EngA-EngB-Septin-like GTPase superfamily. EngA (Der) GTPase family. In terms of assembly, associates with the 50S ribosomal subunit.

Functionally, GTPase that plays an essential role in the late steps of ribosome biogenesis. The sequence is that of GTPase Der from Shewanella sp. (strain W3-18-1).